The chain runs to 272 residues: Small ribosomal subunit biogenesis GTPase RsgA (272 aa).

Residues 56-207 (KNILIRPKVA…IIDTPGFSSI (152 aa)) form the CP-type G domain. Residues 105–108 (TKAD) and 151–159 (GQSGVGKTT) each bind GTP. The Zn(2+) site is built by Cys-230, Cys-235, His-237, and Cys-245.

It belongs to the TRAFAC class YlqF/YawG GTPase family. RsgA subfamily. As to quaternary structure, monomer. Associates with 30S ribosomal subunit, binds 16S rRNA. It depends on Zn(2+) as a cofactor.

It localises to the cytoplasm. Functionally, one of several proteins that assist in the late maturation steps of the functional core of the 30S ribosomal subunit. Helps release RbfA from mature subunits. May play a role in the assembly of ribosomal proteins into the subunit. Circularly permuted GTPase that catalyzes slow GTP hydrolysis, GTPase activity is stimulated by the 30S ribosomal subunit. This Mycoplasmopsis pulmonis (strain UAB CTIP) (Mycoplasma pulmonis) protein is Small ribosomal subunit biogenesis GTPase RsgA.